A 127-amino-acid chain; its full sequence is Riboflavin kinase (127 aa).

CDP is bound at residue 10–15; the sequence is GLGEGR. The Mg(2+) site is built by threonine 39 and asparagine 41. Residues threonine 96 and glutamate 104 each contribute to the FMN site. 109 to 112 lines the CDP pocket; sequence IQLR.

This sequence belongs to the archaeal riboflavin kinase family. Mg(2+) is required as a cofactor.

The catalysed reaction is riboflavin + CTP = CDP + FMN + H(+). It participates in cofactor biosynthesis; FMN biosynthesis; FMN from riboflavin (CTP route): step 1/1. Its function is as follows. Catalyzes the CTP-dependent phosphorylation of riboflavin (vitamin B2) to form flavin mononucleotide (FMN). The sequence is that of Riboflavin kinase from Methanococcus maripaludis (strain C5 / ATCC BAA-1333).